The sequence spans 326 residues: Mitochondrial glycine transporter (326 aa).

Solcar repeat units lie at residues 45 to 134, 141 to 225, and 237 to 321; these read HPVI…SKQY, PTAL…TRTA, and LIPL…MMAR. A run of 6 helical transmembrane segments spans residues 51 to 76, 109 to 135, 147 to 172, 200 to 223, 241 to 267, and 296 to 314; these read FLCGSISGTCSTLLFQPLDLLKTRLQ, GMSPSIVRCVPGVGIYFGTLYSSKQYF, VILGMGSRSVAGVCMSPITVIKTRYE, GLTATLLRDAPFSGLYLMFYSQTR, INFSCGIFAGVLASLVTQPADVIKTHM, and GSVPRALRRTLMAAMAWTV.

Belongs to the mitochondrial carrier (TC 2.A.29) family. SLC25A38 subfamily.

It localises to the mitochondrion inner membrane. The catalysed reaction is glycine(in) = glycine(out). Its function is as follows. Mitochondrial glycine transporter that imports glycine into the mitochondrial matrix. Plays an important role in providing glycine for the first enzymatic step in heme biosynthesis, the condensation of glycine with succinyl-CoA to produce 5-aminolevulinate (ALA) in the mitochondrial matrix. Required during erythropoiesis. In terms of biological role, plays a role as pro-apoptotic protein that induces caspase-dependent apoptosis. In Mus musculus (Mouse), this protein is Mitochondrial glycine transporter.